The chain runs to 65 residues: Large ribosomal subunit protein bL35 (65 aa).

It belongs to the bacterial ribosomal protein bL35 family.

The chain is Large ribosomal subunit protein bL35 from Nostoc sp. (strain PCC 7120 / SAG 25.82 / UTEX 2576).